The following is a 598-amino-acid chain: ATP-dependent lipid A-core flippase (598 aa).

Residues 1–15 (MSQAYQPDSTKTSAK) show a composition bias toward polar residues. Positions 1 to 21 (MSQAYQPDSTKTSAKTPVAPT) are disordered. Transmembrane regions (helical) follow at residues 44–64 (WWAILLTIIGFAINAATEIWI), 85–105 (LFPFIIVMLFFVRGVGSFLGN), 172–192 (VVALMGFLLYSNWRLTLILFV), and 269–289 (INTPAVQLLMAMAMAVVVWLA). An ABC transmembrane type-1 domain is found at 48–329 (LLTIIGFAIN…LTDVNQQLQR (282 aa)). In terms of domain architecture, ABC transporter spans 360 to 595 (IKLDNVSLVY…HGHYAQMYAR (236 aa)). Position 393–400 (393–400 (GRSGAGKS)) interacts with ATP.

This sequence belongs to the ABC transporter superfamily. Lipid exporter (TC 3.A.1.106) family. As to quaternary structure, homodimer.

The protein localises to the cell inner membrane. The enzyme catalyses ATP + H2O + lipid A-core oligosaccharideSide 1 = ADP + phosphate + lipid A-core oligosaccharideSide 2.. Involved in lipopolysaccharide (LPS) biosynthesis. Translocates lipid A-core from the inner to the outer leaflet of the inner membrane. Transmembrane domains (TMD) form a pore in the inner membrane and the ATP-binding domain (NBD) is responsible for energy generation. This is ATP-dependent lipid A-core flippase from Psychrobacter cryohalolentis (strain ATCC BAA-1226 / DSM 17306 / VKM B-2378 / K5).